The following is a 148-amino-acid chain: NADH-quinone oxidoreductase subunit C (148 aa).

It belongs to the complex I 30 kDa subunit family. In terms of assembly, NDH-1 is composed of 14 different subunits. Subunits NuoB, C, D, E, F, and G constitute the peripheral sector of the complex.

The protein resides in the cell membrane. The enzyme catalyses a quinone + NADH + 5 H(+)(in) = a quinol + NAD(+) + 4 H(+)(out). Functionally, NDH-1 shuttles electrons from NADH, via FMN and iron-sulfur (Fe-S) centers, to quinones in the respiratory chain. The immediate electron acceptor for the enzyme in this species is believed to be a menaquinone. Couples the redox reaction to proton translocation (for every two electrons transferred, four hydrogen ions are translocated across the cytoplasmic membrane), and thus conserves the redox energy in a proton gradient. This chain is NADH-quinone oxidoreductase subunit C, found in Moorella thermoacetica (strain ATCC 39073 / JCM 9320).